The primary structure comprises 341 residues: L-threonine 3-dehydrogenase (341 aa).

Cysteine 38 is a Zn(2+) binding site. Residues threonine 40 and histidine 43 each act as charge relay system in the active site. Zn(2+)-binding residues include histidine 63, glutamate 64, cysteine 93, cysteine 96, cysteine 99, and cysteine 107. NAD(+)-binding positions include isoleucine 175, aspartate 195, arginine 200, 262-264, and 286-287; these read LGI and IY.

Belongs to the zinc-containing alcohol dehydrogenase family. Homotetramer. Zn(2+) is required as a cofactor.

It is found in the cytoplasm. The catalysed reaction is L-threonine + NAD(+) = (2S)-2-amino-3-oxobutanoate + NADH + H(+). Its pathway is amino-acid degradation; L-threonine degradation via oxydo-reductase pathway; glycine from L-threonine: step 1/2. Functionally, catalyzes the NAD(+)-dependent oxidation of L-threonine to 2-amino-3-ketobutyrate. In Escherichia coli O127:H6 (strain E2348/69 / EPEC), this protein is L-threonine 3-dehydrogenase.